A 354-amino-acid polypeptide reads, in one-letter code: Peptide chain release factor 1 (354 aa).

Gln232 is subject to N5-methylglutamine.

Belongs to the prokaryotic/mitochondrial release factor family. Post-translationally, methylated by PrmC. Methylation increases the termination efficiency of RF1.

The protein localises to the cytoplasm. Its function is as follows. Peptide chain release factor 1 directs the termination of translation in response to the peptide chain termination codons UAG and UAA. The sequence is that of Peptide chain release factor 1 from Phytoplasma australiense.